A 310-amino-acid polypeptide reads, in one-letter code: Olfactory receptor 4D1 (310 aa).

Residues 1 to 25 are Extracellular-facing; it reads MEPQNTTQVSMFVLLGFSQTQELQK. N-linked (GlcNAc...) asparagine glycosylation is present at N5. Residues 26–49 traverse the membrane as a helical segment; it reads FLFLLFLLVYVTTIVGNLLIMVTV. Residues 50–57 lie on the Cytoplasmic side of the membrane; sequence TFDCRLHT. A helical transmembrane segment spans residues 58-79; the sequence is PMYFLLRNLALIDLCYSTVTSP. Residues 80-100 are Extracellular-facing; that stretch reads KMLVDFLHETKTISYQGCMAQ. C97 and C189 are joined by a disulfide. Residues 101 to 120 form a helical membrane-spanning segment; it reads IFFFHLLGGGTVFFLSVMAY. Residues 121–139 are Cytoplasmic-facing; the sequence is DRYIAISQPLRYVTIMNTQ. Residues 140–158 form a helical membrane-spanning segment; the sequence is LCVGLVVAAWVGGFVHSIV. At 159-195 the chain is on the extracellular side; it reads QLALILPLPFCGPNILDNFYCDVPQVLRLACTDTSLL. Residues 196-219 form a helical membrane-spanning segment; it reads EFLMISNSGLLVIIWFLLLLISYT. Topologically, residues 220–235 are cytoplasmic; that stretch reads VILVMLRSHSGKARRK. A helical transmembrane segment spans residues 236 to 258; the sequence is AASTCTTHIIVVSMIFIPCIYIY. At 259 to 269 the chain is on the extracellular side; it reads TWPFTPFLMDK. Residues 270-289 traverse the membrane as a helical segment; it reads AVSISYTVMTPMLNPMIYTL. The Cytoplasmic portion of the chain corresponds to 290 to 310; that stretch reads RNQDMKAAMRRLGKCLVICRE.

It belongs to the G-protein coupled receptor 1 family.

Its subcellular location is the cell membrane. Its function is as follows. Odorant receptor. In Homo sapiens (Human), this protein is Olfactory receptor 4D1 (OR4D1).